A 531-amino-acid polypeptide reads, in one-letter code: Peptide chain release factor 3 (531 aa).

The tr-type G domain occupies 10-278 (RRRRTFAIIS…SLIEWAPAPK (269 aa)). GTP-binding positions include 19–26 (SHPDAGKT), 87–91 (DTPGH), and 141–144 (NKYD).

The protein belongs to the TRAFAC class translation factor GTPase superfamily. Classic translation factor GTPase family. PrfC subfamily.

The protein resides in the cytoplasm. Functionally, increases the formation of ribosomal termination complexes and stimulates activities of RF-1 and RF-2. It binds guanine nucleotides and has strong preference for UGA stop codons. It may interact directly with the ribosome. The stimulation of RF-1 and RF-2 is significantly reduced by GTP and GDP, but not by GMP. The chain is Peptide chain release factor 3 from Neisseria meningitidis serogroup A / serotype 4A (strain DSM 15465 / Z2491).